Reading from the N-terminus, the 486-residue chain is MNAPEPVQGKPRKRYDAGVMKYKEMGYWDADYEPKDTDLLALFRITPQDGVDPVEAAAAVAGESSTATWTVVWTDRLTACDMYRAKAYRVDPVPNNPEQFFCYVAYDLSLFEEGSIANLTASIIGNVFSFKPIKAARLEDMRFPVAYVKTFAGPSTGIIVERERLDKFGRPLLGATTKPKLGLSGRNYGRVVYEGLKGGLDFMKDDENINSQPFMHWRDRFLFVMDAVNKASAATGEVKGSYLNVTAGTMEEMYRRAEFAKSLGSVIIMVDLIVGWTCIQSMSNWCRQNDMILHLHRAGHGTYTRQKNHGVSFRVIAKWLRLAGVDHMHTGTAVGKLEGDPLTVQGYYNVCRDAYTRTDLTRGLFFDQDWASLRKVMPVASGGIHAGQMHQLISLFGDDVVLQFGGGTIGHPQGIQAGATANRVALEAMVLARNEGRDILNEGPEILRDAARWCGPLRAALDTWGDITFNYTPTDTSDFVPTASVA.

Substrate-binding residues include Asn-126 and Thr-176. Residue Lys-178 is the Proton acceptor of the active site. Lys-180 serves as a coordination point for substrate. 3 residues coordinate Mg(2+): Lys-204, Asp-206, and Glu-207. Lys-204 carries the post-translational modification N6-carboxylysine. The Proton acceptor role is filled by His-296. Residues Arg-297, His-329, and Ser-381 each contribute to the substrate site.

It belongs to the RuBisCO large chain family. Type I subfamily. In terms of assembly, heterohexadecamer of 8 large chains and 8 small chains. Mg(2+) is required as a cofactor.

The catalysed reaction is 2 (2R)-3-phosphoglycerate + 2 H(+) = D-ribulose 1,5-bisphosphate + CO2 + H2O. The enzyme catalyses D-ribulose 1,5-bisphosphate + O2 = 2-phosphoglycolate + (2R)-3-phosphoglycerate + 2 H(+). Functionally, ruBisCO catalyzes two reactions: the carboxylation of D-ribulose 1,5-bisphosphate, the primary event in carbon dioxide fixation, as well as the oxidative fragmentation of the pentose substrate. Both reactions occur simultaneously and in competition at the same active site. The protein is Ribulose bisphosphate carboxylase large chain of Cupriavidus taiwanensis (strain DSM 17343 / BCRC 17206 / CCUG 44338 / CIP 107171 / LMG 19424 / R1) (Ralstonia taiwanensis (strain LMG 19424)).